Here is a 707-residue protein sequence, read N- to C-terminus: UvrABC system protein C (707 aa).

Residues 14–94 enclose the GIY-YIG domain; it reads AEPGCYLMKD…IKKHRPRFNV (81 aa). The UVR domain occupies 206–241; sequence GELVERLRGRMAGAAEGLRFEEAARLRDQLQAVERS. The tract at residues 655 to 707 is disordered; it reads DAPPIAADEPSGAPAGAPGGGPAEASPEAVAAATEAEIDAALADEDASPEPAA. Low complexity-rich tracts occupy residues 660 to 670 and 677 to 689; these read AADEPSGAPAG and AEAS…AATE. Acidic residues predominate over residues 690–707; the sequence is AEIDAALADEDASPEPAA.

Belongs to the UvrC family. In terms of assembly, interacts with UvrB in an incision complex.

Its subcellular location is the cytoplasm. In terms of biological role, the UvrABC repair system catalyzes the recognition and processing of DNA lesions. UvrC both incises the 5' and 3' sides of the lesion. The N-terminal half is responsible for the 3' incision and the C-terminal half is responsible for the 5' incision. This Anaeromyxobacter dehalogenans (strain 2CP-1 / ATCC BAA-258) protein is UvrABC system protein C.